A 443-amino-acid polypeptide reads, in one-letter code: Delta(6)-fatty-acid desaturase fat-3 (443 aa).

One can recognise a Cytochrome b5 heme-binding domain in the interval 1–71; sequence MVVDKNASGL…DLLKKHGEHD (71 aa). 3 helical membrane-spanning segments follow: residues 136 to 156, 296 to 316, and 318 to 338; these read IMAFAFYLQYLGWYITSACLL, TIVGHWAWVFYQLFLLPTWPL, and VAYFIISQMGGGLLIAHVVTF.

Belongs to the fatty acid desaturase type 1 family.

Its subcellular location is the membrane. It catalyses the reaction (9Z,12Z)-octadecadienoyl-CoA + 2 Fe(II)-[cytochrome b5] + O2 + 2 H(+) = (6Z,9Z,12Z)-octadecatrienoyl-CoA + 2 Fe(III)-[cytochrome b5] + 2 H2O. It carries out the reaction (9Z,12Z,15Z)-octadecatrienoyl-CoA + 2 Fe(II)-[cytochrome b5] + O2 + 2 H(+) = (6Z,9Z,12Z,15Z)-octadecatetraenoyl-CoA + 2 Fe(III)-[cytochrome b5] + 2 H2O. Its pathway is lipid metabolism; polyunsaturated fatty acid biosynthesis. Can function as a Delta(6) fatty acid desaturase. Introduces a double bond in the fatty acid chain 6 carbons away from carboxy terminal to biosynthesize polyunsaturated fatty acids (PUFAs) endogenously (PUFAs are essential for membrane structure and many cellular and physiological processes). Acts on a variety of substrates such as linoleoyl-CoA ((9Z,12Z)-octadecadienoyl-CoA, C18:2n-6) and alpha-linolenoyl-CoA ((9Z,12Z,15Z)-octadecatrienoyl-CoA, C18:3n-3) to produce gamma-linolenoyl-CoA ((6Z,9Z,12Z)-octadecatrienoyl-CoA, C18:3n-6) and (6Z,9Z,12Z,15Z)-octadecatetraenoyl-CoA (18:4n-3) respectively. Unlike plants, Caenorhabditis elegans desaturases seem to use fatty acyl-CoAs as substrates. Plays a role in synaptic vesicle recycling by regulating synaptojanin unc-26 localization at synapses. The polypeptide is Delta(6)-fatty-acid desaturase fat-3 (fat-3) (Caenorhabditis elegans).